Consider the following 347-residue polypeptide: Extracellular exo-alpha-(1-&gt;5)-L-arabinofuranosidase ArbA (347 aa).

An N-terminal signal peptide occupies residues 1-31 (MPTHHPITRQHWHHSWLSALALLCASLACGA). Asp35 is a substrate binding site. Asp38 serves as the catalytic Proton acceptor. Substrate contacts are provided by residues 90–92 (DGH), 115–116 (GK), Asn155, Ser175, and Glu221. The active-site Proton donor is the Glu221. Position 291 (His291) interacts with Ca(2+). Residue Gln316 participates in substrate binding.

Belongs to the glycosyl hydrolase 43 family. As to quaternary structure, homodimer.

It is found in the secreted. It catalyses the reaction Hydrolysis of terminal non-reducing alpha-L-arabinofuranoside residues in alpha-L-arabinosides.. Its pathway is glycan metabolism; L-arabinan degradation. Its function is as follows. Involved in the degradation of arabinan and is a key enzyme in the complete degradation of the plant cell wall. Catalyzes the cleavage of the terminal alpha-(1-&gt;5)-arabinofuranosyl bonds of linear arabinan and carboxymethylarabinan to produce almost exclusively arabinotriose. This chain is Extracellular exo-alpha-(1-&gt;5)-L-arabinofuranosidase ArbA (arbA), found in Cellvibrio japonicus (strain Ueda107) (Pseudomonas fluorescens subsp. cellulosa).